A 66-amino-acid polypeptide reads, in one-letter code: Large ribosomal subunit protein bL33c (66 aa).

The protein belongs to the bacterial ribosomal protein bL33 family.

Its subcellular location is the plastid. It is found in the chloroplast. The chain is Large ribosomal subunit protein bL33c from Physcomitrium patens (Spreading-leaved earth moss).